Reading from the N-terminus, the 335-residue chain is Putative hydrogenase expression/formation protein MJ0676 (335 aa).

It belongs to the HypE family.

The protein is Putative hydrogenase expression/formation protein MJ0676 of Methanocaldococcus jannaschii (strain ATCC 43067 / DSM 2661 / JAL-1 / JCM 10045 / NBRC 100440) (Methanococcus jannaschii).